The chain runs to 677 residues: Methionine--tRNA ligase (677 aa).

The 'HIGH' region motif lies at 15 to 25 (PYANGSIHLGH). Residues cysteine 146, cysteine 149, cysteine 159, and cysteine 162 each coordinate Zn(2+). The 'KMSKS' region motif lies at 333–337 (KMSKS). Lysine 336 serves as a coordination point for ATP. Residues 575 to 677 (DFAKIDLRVA…DGAKPGQQVK (103 aa)) enclose the tRNA-binding domain.

The protein belongs to the class-I aminoacyl-tRNA synthetase family. MetG type 1 subfamily. Homodimer. It depends on Zn(2+) as a cofactor.

The protein localises to the cytoplasm. The catalysed reaction is tRNA(Met) + L-methionine + ATP = L-methionyl-tRNA(Met) + AMP + diphosphate. In terms of biological role, is required not only for elongation of protein synthesis but also for the initiation of all mRNA translation through initiator tRNA(fMet) aminoacylation. This is Methionine--tRNA ligase from Salmonella choleraesuis (strain SC-B67).